We begin with the raw amino-acid sequence, 281 residues long: 4-diphosphocytidyl-2-C-methyl-D-erythritol kinase (281 aa).

The active site involves K15. 98–108 (PTGAGLGGGSS) serves as a coordination point for ATP. D140 is an active-site residue.

This sequence belongs to the GHMP kinase family. IspE subfamily.

It carries out the reaction 4-CDP-2-C-methyl-D-erythritol + ATP = 4-CDP-2-C-methyl-D-erythritol 2-phosphate + ADP + H(+). The protein operates within isoprenoid biosynthesis; isopentenyl diphosphate biosynthesis via DXP pathway; isopentenyl diphosphate from 1-deoxy-D-xylulose 5-phosphate: step 3/6. In terms of biological role, catalyzes the phosphorylation of the position 2 hydroxy group of 4-diphosphocytidyl-2C-methyl-D-erythritol. This chain is 4-diphosphocytidyl-2-C-methyl-D-erythritol kinase, found in Neisseria meningitidis serogroup A / serotype 4A (strain DSM 15465 / Z2491).